The primary structure comprises 367 residues: tRNA/tmRNA (uracil-C(5))-methyltransferase (367 aa).

The S-adenosyl-L-methionine site is built by Gln-190, Tyr-218, Asn-223, Glu-239, and Asp-299. The active-site Nucleophile is Cys-324. Glu-358 serves as the catalytic Proton acceptor.

This sequence belongs to the class I-like SAM-binding methyltransferase superfamily. RNA M5U methyltransferase family. TrmA subfamily.

The enzyme catalyses uridine(54) in tRNA + S-adenosyl-L-methionine = 5-methyluridine(54) in tRNA + S-adenosyl-L-homocysteine + H(+). It catalyses the reaction uridine(341) in tmRNA + S-adenosyl-L-methionine = 5-methyluridine(341) in tmRNA + S-adenosyl-L-homocysteine + H(+). Dual-specificity methyltransferase that catalyzes the formation of 5-methyluridine at position 54 (m5U54) in all tRNAs, and that of position 341 (m5U341) in tmRNA (transfer-mRNA). In Erwinia tasmaniensis (strain DSM 17950 / CFBP 7177 / CIP 109463 / NCPPB 4357 / Et1/99), this protein is tRNA/tmRNA (uracil-C(5))-methyltransferase.